The following is a 256-amino-acid chain: Thiazole synthase (256 aa).

The active-site Schiff-base intermediate with DXP is K95. 1-deoxy-D-xylulose 5-phosphate is bound by residues G156, 182–183 (AG), and 204–205 (NT).

The protein belongs to the ThiG family. In terms of assembly, homotetramer. Forms heterodimers with either ThiH or ThiS.

It localises to the cytoplasm. The catalysed reaction is [ThiS sulfur-carrier protein]-C-terminal-Gly-aminoethanethioate + 2-iminoacetate + 1-deoxy-D-xylulose 5-phosphate = [ThiS sulfur-carrier protein]-C-terminal Gly-Gly + 2-[(2R,5Z)-2-carboxy-4-methylthiazol-5(2H)-ylidene]ethyl phosphate + 2 H2O + H(+). The protein operates within cofactor biosynthesis; thiamine diphosphate biosynthesis. Catalyzes the rearrangement of 1-deoxy-D-xylulose 5-phosphate (DXP) to produce the thiazole phosphate moiety of thiamine. Sulfur is provided by the thiocarboxylate moiety of the carrier protein ThiS. In vitro, sulfur can be provided by H(2)S. The chain is Thiazole synthase from Salmonella paratyphi A (strain ATCC 9150 / SARB42).